A 34-amino-acid polypeptide reads, in one-letter code: Phallacidin proprotein 1 (34 aa).

Positions methionine 1–proline 10 are excised as a propeptide. A cross-link (cyclopeptide (Ala-Pro)) is located at residues alanine 11–proline 17. Positions tryptophan 12 to cysteine 16 form a cross-link, 2'-cysteinyl-6'-hydroxytryptophan sulfoxide (Trp-Cys). A propeptide spanning residues cysteine 18 to cysteine 34 is cleaved from the precursor.

This sequence belongs to the MSDIN fungal toxin family. Processed by the macrocyclase-peptidase enzyme POPB to yield a toxic cyclic heptapeptide. POPB first removes 10 residues from the N-terminus. Conformational trapping of the remaining peptide forces the enzyme to release this intermediate rather than proceed to macrocyclization. The enzyme rebinds the remaining peptide in a different conformation and catalyzes macrocyclization of the N-terminal 7 residues.

Major toxin that belongs to the bicyclic heptapeptides called phallotoxins. Although structurally related to amatoxins, phallotoxins have a different mode of action, which is the stabilization of F-actin. Phallotoxins are poisonous when administered parenterally, but not orally because of poor absorption. The polypeptide is Phallacidin proprotein 1 (Amanita bisporigera (Destroying angel)).